Reading from the N-terminus, the 511-residue chain is Maturase K (511 aa).

This sequence belongs to the intron maturase 2 family. MatK subfamily.

The protein resides in the plastid. It localises to the chloroplast. Usually encoded in the trnK tRNA gene intron. Probably assists in splicing its own and other chloroplast group II introns. The sequence is that of Maturase K from Acorus calamus var. americanus (American sweet flag).